Here is a 794-residue protein sequence, read N- to C-terminus: uncharacterized protein (794 aa).

Positions 1–22 (MKLKYGTIIFSGLLGVSAILAA) are cleaved as a signal peptide. A lipid anchor (N-palmitoyl cysteine) is attached at Cys23. Residue Cys23 is the site of S-diacylglycerol cysteine attachment. Residues 177–196 (SSGKTQVSQTSSGSNQQKTL) show a composition bias toward polar residues. Disordered stretches follow at residues 177-208 (SSGK…SDSS), 220-257 (AKNN…DKKI), and 466-506 (KSTD…ENNS). Low complexity predominate over residues 220–231 (AKNNGKKANNSK). Positions 238–250 (DQSTQTHNDQGDA) are enriched in polar residues.

This sequence belongs to the MG185/MG260 family.

Its subcellular location is the cell membrane. This is an uncharacterized protein from Mycoplasma pneumoniae (strain ATCC 29342 / M129 / Subtype 1) (Mycoplasmoides pneumoniae).